We begin with the raw amino-acid sequence, 257 residues long: UPF0246 protein CLL_A2361 (257 aa).

It belongs to the UPF0246 family.

This chain is UPF0246 protein CLL_A2361, found in Clostridium botulinum (strain Eklund 17B / Type B).